A 306-amino-acid chain; its full sequence is MWCPSVSLSLWANAWLAGKASAPTSLRRVIVWAPKQSVTAYDAVAAGHTGLPWPDVHDAGTVTLLQTARHDRRAGGLRTDARTINVVLPVPGDVRGLAPGTQFEQDALAAGEAVIVSNPHQPGAAVGLVPEFCYADDDDGSQDYALTELCALSWTVYSLPGAPVLDHHELGDASYTLRSAVRSAAETLGAIGLGSAASDVDDPRGLVQQLLESARQHRIPDQPPSPLRVLENRAHVDAIIAVSAGLSRSDSPDRFAAPIAAGLEPLGTQSSSEARIAGDPVRPLTAVVRSARMAAVTAILHSAWGD.

It to M.tuberculosis Rv1486c, M.bovis Mb1522c and M.leprae ML1804.

This is an uncharacterized protein from Mycobacterium avium.